The chain runs to 663 residues: DNA topoisomerase 4 subunit B (663 aa).

Residues tyrosine 7, asparagine 47, aspartate 74, glycine 114–alanine 120, and lysine 341 each bind ATP. The interval arginine 386 to alanine 416 is disordered. Residues glutamate 387–serine 398 are compositionally biased toward basic and acidic residues. Positions asparagine 424 to proline 538 constitute a Toprim domain. Glutamate 430, aspartate 503, and aspartate 505 together coordinate Mg(2+).

Belongs to the type II topoisomerase family. ParE type 2 subfamily. As to quaternary structure, heterotetramer composed of ParC and ParE. Mg(2+) serves as cofactor. The cofactor is Mn(2+). Requires Ca(2+) as cofactor.

The enzyme catalyses ATP-dependent breakage, passage and rejoining of double-stranded DNA.. Functionally, topoisomerase IV is essential for chromosome segregation. It relaxes supercoiled DNA. Performs the decatenation events required during the replication of a circular DNA molecule. The protein is DNA topoisomerase 4 subunit B of Staphylococcus aureus (strain MSSA476).